The chain runs to 128 residues: Class I hydrophobin 19 (128 aa).

Disulfide bonds link C48–C107, C55–C101, C56–C88, and C108–C121. N110 carries an N-linked (GlcNAc...) asparagine glycan.

It belongs to the fungal hydrophobin family. As to quaternary structure, self-assembles to form functional amyloid fibrils called rodlets. Self-assembly into fibrillar rodlets occurs spontaneously at hydrophobic:hydrophilic interfaces and the rodlets further associate laterally to form amphipathic monolayers.

The protein resides in the secreted. Its subcellular location is the cell wall. In terms of biological role, aerial growth, conidiation, and dispersal of filamentous fungi in the environment rely upon a capability of their secreting small amphipathic proteins called hydrophobins (HPBs) with low sequence identity. Class I can self-assemble into an outermost layer of rodlet bundles on aerial cell surfaces, conferring cellular hydrophobicity that supports fungal growth, development and dispersal; whereas Class II form highly ordered films at water-air interfaces through intermolecular interactions but contribute nothing to the rodlet structure. This Pleurotus ostreatus (strain PC15) (Oyster mushroom) protein is Class I hydrophobin 19.